Here is a 314-residue protein sequence, read N- to C-terminus: tRNA pseudouridine synthase B (314 aa).

Residue H43 participates in substrate binding. D48 functions as the Nucleophile in the catalytic mechanism. 3 residues coordinate substrate: Y76, Y179, and L200.

Belongs to the pseudouridine synthase TruB family. Type 1 subfamily.

It catalyses the reaction uridine(55) in tRNA = pseudouridine(55) in tRNA. Responsible for synthesis of pseudouridine from uracil-55 in the psi GC loop of transfer RNAs. The sequence is that of tRNA pseudouridine synthase B from Enterobacter sp. (strain 638).